A 107-amino-acid polypeptide reads, in one-letter code: Heme-degrading monooxygenase (107 aa).

In terms of domain architecture, ABM spans Ile-2–Tyr-94. Position 6 (Asn-6) interacts with Fe cation. His-76 provides a ligand contact to heme.

This sequence belongs to the antibiotic biosynthesis monooxygenase family. Heme-degrading monooxygenase IsdG subfamily. In terms of assembly, homodimer.

It is found in the cytoplasm. It carries out the reaction heme b + 3 reduced [NADPH--hemoprotein reductase] + 3 O2 = biliverdin IXalpha + CO + Fe(2+) + 3 oxidized [NADPH--hemoprotein reductase] + 3 H2O + H(+). In terms of biological role, allows bacterial pathogens to use the host heme as an iron source. Catalyzes the oxidative degradation of the heme macrocyclic porphyrin ring to the biliverdin in the presence of a suitable electron donor such as ascorbate or NADPH--cytochrome P450 reductase, with subsequent release of free iron. The polypeptide is Heme-degrading monooxygenase (Bacillus thuringiensis subsp. konkukian (strain 97-27)).